We begin with the raw amino-acid sequence, 489 residues long: Dipeptide and tripeptide permease B (489 aa).

Residues 1–27 (MNKPASIGLLQQPKPFFMIFFVELWER) are Cytoplasmic-facing. Residues 28–48 (FGYYGVQGILAVYFVHKLGFS) form a helical membrane-spanning segment. At 49–52 (QEQA) the chain is on the periplasmic side. Residues 53–73 (FTTFGAFAALVYGLIAIGGYV) form a helical membrane-spanning segment. Residues 74–82 (GDHLLGTKR) are Cytoplasmic-facing. Residues 83-103 (TIVLGAIVLTVGYFMTGLSIL) form a helical membrane-spanning segment. The Periplasmic segment spans residues 104-106 (KPE). A helical membrane pass occupies residues 107–127 (LIFYALGTIAVGNGLFKANPA). The Cytoplasmic segment spans residues 128 to 146 (SLLSKCYPPKDPRLDGAFT). The helical transmembrane segment at 147–167 (LFYMSINIGSLFSLAIAPVIA) threads the bilayer. The Periplasmic segment spans residues 168–171 (EKFG). The helical transmembrane segment at 172 to 192 (YAVTYNICGIGLIIALLVYVL) threads the bilayer. Topologically, residues 193–212 (YRNTVRNIGSEPDHRPINYK) are cytoplasmic. 2 consecutive transmembrane segments (helical) span residues 213–233 (NLLLVLAGTVTMVFVCAWLMH) and 234–254 (NVKIANIVLIGLSVVIVFIFF). The Cytoplasmic segment spans residues 255–267 (REAFKQDKVGRNK). Residues 268–288 (MFVAFILMLQAIVFFILYAQM) form a helical membrane-spanning segment. Residues 289–311 (PTSLNFFAINNVHHQLLGFNINP) are Periplasmic-facing. The helical transmembrane segment at 312–332 (VSFQALNPFWIVVASPILAAL) threads the bilayer. The Cytoplasmic portion of the chain corresponds to 333-350 (YTHWGSRSKDLTMPAKFT). Residues 351-371 (VGMFLCSLGFLTAAAAGLWFA) traverse the membrane as a helical segment. The Periplasmic portion of the chain corresponds to 372–375 (DEQG). Residues 376–396 (LTSPWFIVLVYLFQSLGELMI) traverse the membrane as a helical segment. Residues 397 to 419 (SALGLAMVAALVPQYLMGFILGM) are Cytoplasmic-facing. The helical transmembrane segment at 420–440 (WYLTQATSFLLGGYVAAFTAI) threads the bilayer. The Periplasmic portion of the chain corresponds to 441–456 (PEGITDPLETLPVYTN). Residues 457-477 (VFGKIGITTFIVAIIMAITVP) traverse the membrane as a helical segment. The Cytoplasmic portion of the chain corresponds to 478-489 (LLNRMMNGKQKA).

Belongs to the major facilitator superfamily. Proton-dependent oligopeptide transporter (POT/PTR) (TC 2.A.17) family. DtpB subfamily.

The protein localises to the cell inner membrane. Functionally, proton-dependent permease that transports di- and tripeptides. This is Dipeptide and tripeptide permease B from Photorhabdus asymbiotica subsp. asymbiotica (strain ATCC 43949 / 3105-77) (Xenorhabdus luminescens (strain 2)).